A 349-amino-acid polypeptide reads, in one-letter code: Ion-translocating oxidoreductase complex subunit D (349 aa).

Helical transmembrane passes span 36–56, 77–99, and 124–144; these read CAFF…VALS, SAML…WMIV, and AMAA…SWIA. An FMN phosphoryl threonine modification is found at Thr185. Helical transmembrane passes span 212–232, 239–259, 265–285, 291–311, and 315–335; these read GTGV…LVLL, WHIS…GFLL, ASPL…FIAT, ATSP…VYII, and GGYP…APFI.

The protein belongs to the NqrB/RnfD family. As to quaternary structure, the complex is composed of six subunits: RnfA, RnfB, RnfC, RnfD, RnfE and RnfG. The cofactor is FMN.

It is found in the cell inner membrane. Functionally, part of a membrane-bound complex that couples electron transfer with translocation of ions across the membrane. This is Ion-translocating oxidoreductase complex subunit D from Shewanella sp. (strain ANA-3).